A 591-amino-acid chain; its full sequence is Dihydroxyacetone kinase 2 (591 aa).

The 337-residue stretch at serine 8–tryptophan 344 folds into the DhaK domain. A disordered region spans residues alanine 40–serine 59. Substrate contacts are provided by residues glycine 58 to histidine 61, lysine 109, and aspartate 114. Histidine 223 acts as the Tele-hemiaminal-histidine intermediate in catalysis. One can recognise a DhaL domain in the interval aspartate 384–threonine 587. ATP-binding positions include aspartate 413 to cysteine 416, threonine 459 to serine 460, threonine 511 to leucine 512, and aspartate 572 to glycine 574.

Belongs to the dihydroxyacetone kinase (DAK) family.

It carries out the reaction dihydroxyacetone + ATP = dihydroxyacetone phosphate + ADP + H(+). The catalysed reaction is D-glyceraldehyde + ATP = D-glyceraldehyde 3-phosphate + ADP + H(+). Its pathway is polyol metabolism; glycerol fermentation; glycerone phosphate from glycerol (oxidative route): step 2/2. Functionally, catalyzes both the phosphorylation of dihydroxyacetone and of glyceraldehyde. The sequence is that of Dihydroxyacetone kinase 2 (DAK2) from Saccharomyces cerevisiae (strain ATCC 204508 / S288c) (Baker's yeast).